Here is a 318-residue protein sequence, read N- to C-terminus: O-glucosyltransferase LpsA (318 aa).

It belongs to the glycosyltransferase 90 family.

The protein operates within protein modification; protein glycosylation. Its function is as follows. Involved in lipopolysaccharide core biosynthesis. The protein is O-glucosyltransferase LpsA (lpsA) of Dichelobacter nodosus (Bacteroides nodosus).